A 407-amino-acid chain; its full sequence is MKSFFKPLILKKFLWTLLFVFIYVLGSKLTLPFVDVSSIAKLNGDSVTLNYAAALMGGNLRSMSFFSIGLAPWMSSILIWQMFTVSKRLGLNKLSMESQEKRRMLLTLAIALIQSLGLVLNLPLKTVAGVGQGTIVFLDTLILIAGTYFLIWLTDLNSSMGLGGSIMIVMVSMISYIPQDIWLSIQELKISPLILALIGFFSLCFLYLAVLVERAKYRIPINKINIHNRFKKYSYLDIRVNAAGGLPIMYAMTLVSIPQYFLMLLLFFQPNNRLLKEGILSLAMGGIPWFILYLLTIFILAWAFAFINVNSDQIAERMQRSGEYIENLYPGEATRRYIHKTVGYFAFVGALYLVLVAGLPMLLIFLDIRYMRLGMIPGMFMIFIGMVFSIKDEVDTLTLNDRYHSLF.

The next 10 membrane-spanning stretches (helical) occupy residues 13-33, 65-85, 104-124, 133-153, 158-178, 192-212, 248-268, 287-307, 345-365, and 370-390; these read FLWT…TLPF, FFSI…MFTV, MLLT…NLPL, GTIV…LIWL, SSMG…SYIP, PLIL…AVLV, IMYA…LLFF, IPWF…FAFI, FAFV…LLIF, and YMRL…VFSI.

Belongs to the SecY/SEC61-alpha family. SecY2 subfamily. May form heterotrimers with SecE and SecG subunits (Potential). Component of the accessory SecA2/SecY2 protein translocase complex required to export cell wall protein GspB.

It localises to the cell membrane. In terms of biological role, the central subunit of a protein translocation channel (Potential). Part of the accessory SecA2/SecY2 system specifically required to export GspB, a serine-rich repeat cell wall protein encoded upstream in the same operon. This is Accessory Sec system protein translocase subunit SecY2 from Streptococcus gordonii.